Here is a 314-residue protein sequence, read N- to C-terminus: Homoserine kinase (314 aa).

An ATP-binding site is contributed by 97-107 (PPARGMGSSAT).

This sequence belongs to the GHMP kinase family. Homoserine kinase subfamily.

It localises to the cytoplasm. It carries out the reaction L-homoserine + ATP = O-phospho-L-homoserine + ADP + H(+). It participates in amino-acid biosynthesis; L-threonine biosynthesis; L-threonine from L-aspartate: step 4/5. In terms of biological role, catalyzes the ATP-dependent phosphorylation of L-homoserine to L-homoserine phosphate. The protein is Homoserine kinase of Synechococcus sp. (strain RCC307).